Reading from the N-terminus, the 229-residue chain is Ribonuclease 3 (229 aa).

Residues 2 to 130 (FEKLQDVLCY…ILGAIFLDGG (129 aa)) form the RNase III domain. Glutamate 43 contacts Mg(2+). The active site involves aspartate 47. Mg(2+) contacts are provided by aspartate 116 and glutamate 119. Residue glutamate 119 is part of the active site. The DRBM domain occupies 157-226 (DAKSTLQELT…AGLALELLEG (70 aa)).

It belongs to the ribonuclease III family. In terms of assembly, homodimer. Mg(2+) is required as a cofactor.

The protein localises to the cytoplasm. The enzyme catalyses Endonucleolytic cleavage to 5'-phosphomonoester.. Digests double-stranded RNA. Involved in the processing of primary rRNA transcript to yield the immediate precursors to the large and small rRNAs (23S and 16S). Processes some mRNAs, and tRNAs when they are encoded in the rRNA operon. Processes pre-crRNA and tracrRNA of type II CRISPR loci if present in the organism. The chain is Ribonuclease 3 from Oleidesulfovibrio alaskensis (strain ATCC BAA-1058 / DSM 17464 / G20) (Desulfovibrio alaskensis).